Here is a 171-residue protein sequence, read N- to C-terminus: Crossover junction endodeoxyribonuclease RuvC (171 aa).

Residues aspartate 11, glutamate 71, and aspartate 143 contribute to the active site. The Mg(2+) site is built by aspartate 11, glutamate 71, and aspartate 143.

This sequence belongs to the RuvC family. As to quaternary structure, homodimer which binds Holliday junction (HJ) DNA. The HJ becomes 2-fold symmetrical on binding to RuvC with unstacked arms; it has a different conformation from HJ DNA in complex with RuvA. In the full resolvosome a probable DNA-RuvA(4)-RuvB(12)-RuvC(2) complex forms which resolves the HJ. Mg(2+) is required as a cofactor.

The protein localises to the cytoplasm. The catalysed reaction is Endonucleolytic cleavage at a junction such as a reciprocal single-stranded crossover between two homologous DNA duplexes (Holliday junction).. In terms of biological role, the RuvA-RuvB-RuvC complex processes Holliday junction (HJ) DNA during genetic recombination and DNA repair. Endonuclease that resolves HJ intermediates. Cleaves cruciform DNA by making single-stranded nicks across the HJ at symmetrical positions within the homologous arms, yielding a 5'-phosphate and a 3'-hydroxyl group; requires a central core of homology in the junction. The consensus cleavage sequence is 5'-(A/T)TT(C/G)-3'. Cleavage occurs on the 3'-side of the TT dinucleotide at the point of strand exchange. HJ branch migration catalyzed by RuvA-RuvB allows RuvC to scan DNA until it finds its consensus sequence, where it cleaves and resolves the cruciform DNA. In Bartonella tribocorum (strain CIP 105476 / IBS 506), this protein is Crossover junction endodeoxyribonuclease RuvC.